Here is a 245-residue protein sequence, read N- to C-terminus: Thiopurine S-methyltransferase (245 aa).

Serine 14 carries the phosphoserine modification. Residue 29 to 40 coordinates S-adenosyl-L-methionine; the sequence is WQGKWVTGKTIF. Phenylalanine 40 lines the substrate pocket. Lysine 58 bears the N6-acetyllysine mark. Positions 69, 90, and 152 each coordinate S-adenosyl-L-methionine.

The protein belongs to the class I-like SAM-binding methyltransferase superfamily. TPMT family. As to quaternary structure, monomer.

The protein localises to the cytoplasm. The enzyme catalyses S-adenosyl-L-methionine + a thiopurine = S-adenosyl-L-homocysteine + a thiopurine S-methylether.. The polypeptide is Thiopurine S-methyltransferase (TPMT) (Equus caballus (Horse)).